The primary structure comprises 179 residues: Zinc finger HIT domain-containing protein 3 (179 aa).

The Zn(2+) site is built by Cys-11, Cys-14, Cys-22, Cys-25, Cys-30, Cys-34, His-38, and Cys-49. The HIT-type zinc finger occupies 11–49 (CVVCLEKPKYRCPACRVPYCSLPCFRKHKAPPLQQLPVC). Ser-104 is subject to Phosphoserine.

As to quaternary structure, thyroid receptor interacting proteins (TRIPs) specifically interact with the ligand binding domain of the thyroid receptor (TR). Requires the presence of thyroid hormone for its interaction. Interacts with NUFIP1. Interacts (via HIT-type zinc finger) with the RUVBL1/RUVBL2 complex in the presence of ADP.

It localises to the cytoplasm. Its subcellular location is the nucleus. The sequence is that of Zinc finger HIT domain-containing protein 3 (ZNHIT3) from Bos taurus (Bovine).